The chain runs to 103 residues: Small ribosomal subunit protein bS18 (103 aa).

Residues Met1–Gln19 show a composition bias toward basic and acidic residues. The interval Met1 to Arg33 is disordered. Residues Gly24–Arg33 are compositionally biased toward basic residues.

This sequence belongs to the bacterial ribosomal protein bS18 family. Part of the 30S ribosomal subunit. Forms a tight heterodimer with protein bS6.

Binds as a heterodimer with protein bS6 to the central domain of the 16S rRNA, where it helps stabilize the platform of the 30S subunit. This chain is Small ribosomal subunit protein bS18, found in Geobacter sulfurreducens (strain ATCC 51573 / DSM 12127 / PCA).